A 187-amino-acid chain; its full sequence is Chlorobenzene dioxygenase subunit beta (187 aa).

Belongs to the bacterial ring-hydroxylating dioxygenase beta subunit family. In terms of assembly, this dioxygenase system consists of four proteins: the two subunits of the oxygenase component (TecA1 and TecA2), a ferredoxin (TecA3) and a ferredoxin reductase (TecA4).

The enzyme catalyses chlorobenzene + NADH + O2 + H(+) = (1R,2R)-3-chlorocyclohexa-3,5-diene-1,2-diol + NAD(+). It participates in aromatic compound metabolism. Its function is as follows. Part of the oxygenase component of the chlorobenzene dioxygenase system that catalyzes the dihydroxylation of a range of aromatic compounds, including chlorinated benzenes and toluenes, and dinuclear aromatics such as biphenyl and dibenzo-p-dioxin. The beta subunit is not directly involved in the control of substrate specificity. This Cupriavidus sp. (strain PS12) protein is Chlorobenzene dioxygenase subunit beta.